Reading from the N-terminus, the 138-residue chain is ATP synthase epsilon chain (138 aa).

It belongs to the ATPase epsilon chain family. F-type ATPases have 2 components, CF(1) - the catalytic core - and CF(0) - the membrane proton channel. CF(1) has five subunits: alpha(3), beta(3), gamma(1), delta(1), epsilon(1). CF(0) has three main subunits: a, b and c.

The protein localises to the cell inner membrane. In terms of biological role, produces ATP from ADP in the presence of a proton gradient across the membrane. This is ATP synthase epsilon chain from Cupriavidus necator (strain ATCC 17699 / DSM 428 / KCTC 22496 / NCIMB 10442 / H16 / Stanier 337) (Ralstonia eutropha).